Here is a 356-residue protein sequence, read N- to C-terminus: MRVTDFSFELPESLIAHYPMPERSSCRLLSLDGPTGALTHGTFTDLLDKLNPGDLLVFNNTRVIPARLFGRKASGGKIEVLVERMLDEKRILAHIRASKAPKPGAELLLGDDESINATMTARHGALFEVEFNDDRSVLDILNSIGHIPLPPYIDRPDEDADRELYQTVYSEKPGAVAAPTAGLHFDEPLLEKLRAKGVEMAFVTLHVGAGTFQPVRVDTIEDHIMHSEYAEVPQDVVDAVLAAKARGNRVIAVGTTSVRSLESAAQAAKNDLIEPFFDDTQIFIYPGFQYKVVDALVTNFHLPESTLIMLVSAFAGYQHTMNAYKAAVEEKYRFFSYGDAMFITYNPQAINERVGE.

This sequence belongs to the QueA family. Monomer.

It is found in the cytoplasm. The enzyme catalyses 7-aminomethyl-7-carbaguanosine(34) in tRNA + S-adenosyl-L-methionine = epoxyqueuosine(34) in tRNA + adenine + L-methionine + 2 H(+). The protein operates within tRNA modification; tRNA-queuosine biosynthesis. Its function is as follows. Transfers and isomerizes the ribose moiety from AdoMet to the 7-aminomethyl group of 7-deazaguanine (preQ1-tRNA) to give epoxyqueuosine (oQ-tRNA). The sequence is that of S-adenosylmethionine:tRNA ribosyltransferase-isomerase from Escherichia coli (strain UTI89 / UPEC).